The sequence spans 278 residues: Putative transcription factor kapC (278 aa).

Pro residues predominate over residues 1-10 (MQPALAPAPH). The tract at residues 1 to 121 (MQPALAPAPH…QNRAAQRAFR (121 aa)) is disordered. Polar residues predominate over residues 56-68 (PTATTSPRDQNNI). The bZIP domain occupies 103–166 (PLSTSKRAAQ…EYVINLQSRL (64 aa)). The segment at 104–127 (LSTSKRAAQNRAAQRAFRQRKESY) is basic motif. Positions 109–119 (RAAQNRAAQRA) are enriched in low complexity. Positions 131 to 162 (LEEQVKEYEVMSQEYKALQAENYQLREYVINL) are leucine-zipper. Residues 173–278 (VPELPGNIDL…PPTHGLPMVS (106 aa)) are disordered. Residues 198-214 (PGQAGASAPPQGSPQSQ) show a composition bias toward low complexity. Residues 215 to 226 (VSIANDDMNSLN) show a composition bias toward polar residues. Positions 254–269 (GRGDETADPSETKTEP) are enriched in basic and acidic residues.

Belongs to the bZIP family.

It localises to the nucleus. In terms of biological role, putative transcription factor. The sequence is that of Putative transcription factor kapC (kapC) from Emericella nidulans (strain FGSC A4 / ATCC 38163 / CBS 112.46 / NRRL 194 / M139) (Aspergillus nidulans).